Reading from the N-terminus, the 518-residue chain is Transcription factor TT8 (518 aa).

Coiled coils occupy residues glutamate 220–glutamate 240 and valine 405–arginine 428. Residues arginine 359–leucine 408 form the bHLH domain.

The protein belongs to the bHLH protein family. Homodimer. Interacts with MYB4, MYB5, MYB6, MYB82, MYB113, MYB114, MYB75/PAP1, MYB90/PAP2, and TT2. In terms of tissue distribution, buds, flowers and developing siliques, but not in leaves, stems and roots.

The protein localises to the nucleus. Its function is as follows. Transcription activator, when associated with MYB75/PAP1 or MYB90/PAP2. Involved in the control of flavonoid pigmentation. Plays a key role in regulating leucoanthocyanidin reductase (BANYULS) and dihydroflavonol-4-reductase (DFR). Not required for leucoanthocyanidin dioxygenase (LDOX) expression. This chain is Transcription factor TT8, found in Arabidopsis thaliana (Mouse-ear cress).